An 817-amino-acid polypeptide reads, in one-letter code: Leucine--tRNA ligase (817 aa).

A 'HIGH' region motif is present at residues 51–61; the sequence is PYPSGDLHVGH. A 'KMSKS' region motif is present at residues 588–592; it reads RMSKS. K591 contacts ATP.

This sequence belongs to the class-I aminoacyl-tRNA synthetase family.

Its subcellular location is the cytoplasm. It carries out the reaction tRNA(Leu) + L-leucine + ATP = L-leucyl-tRNA(Leu) + AMP + diphosphate. This chain is Leucine--tRNA ligase, found in Rubrobacter xylanophilus (strain DSM 9941 / JCM 11954 / NBRC 16129 / PRD-1).